The following is a 385-amino-acid chain: Cytochrome b (385 aa).

The next 4 helical transmembrane spans lie at 32–52 (LGSL…FMAM), 76–98 (WLLR…MHIA), 113–133 (VWIV…LGYC), and 179–199 (FFAL…MHFM). The heme b site is built by histidine 82 and histidine 96. Heme b-binding residues include histidine 183 and histidine 197. Histidine 202 provides a ligand contact to a ubiquinone. 4 helical membrane passes run 225–245 (FIFK…LFVF), 289–309 (LLGV…PITD), 321–341 (LSKF…QIGQ), and 348–368 (FVLM…IIVP).

It belongs to the cytochrome b family. As to quaternary structure, fungal cytochrome b-c1 complex contains 10 subunits; 3 respiratory subunits, 2 core proteins and 5 low-molecular weight proteins. Cytochrome b-c1 complex is a homodimer. The cofactor is heme b.

It is found in the mitochondrion inner membrane. Component of the ubiquinol-cytochrome c reductase complex (complex III or cytochrome b-c1 complex) that is part of the mitochondrial respiratory chain. The b-c1 complex mediates electron transfer from ubiquinol to cytochrome c. Contributes to the generation of a proton gradient across the mitochondrial membrane that is then used for ATP synthesis. This is Cytochrome b (COB) from Candida glabrata (strain ATCC 2001 / BCRC 20586 / JCM 3761 / NBRC 0622 / NRRL Y-65 / CBS 138) (Yeast).